Reading from the N-terminus, the 355-residue chain is Alanine racemase (355 aa).

Catalysis depends on lysine 34, which acts as the Proton acceptor; specific for D-alanine. Lysine 34 is subject to N6-(pyridoxal phosphate)lysine. A substrate-binding site is contributed by arginine 133. The active-site Proton acceptor; specific for L-alanine is the tyrosine 249. Methionine 297 contributes to the substrate binding site.

It belongs to the alanine racemase family. The cofactor is pyridoxal 5'-phosphate.

It catalyses the reaction L-alanine = D-alanine. The protein operates within amino-acid biosynthesis; D-alanine biosynthesis; D-alanine from L-alanine: step 1/1. Its function is as follows. Catalyzes the interconversion of L-alanine and D-alanine. May also act on other amino acids. This is Alanine racemase (alr) from Rickettsia conorii (strain ATCC VR-613 / Malish 7).